The sequence spans 72 residues: DNA-directed RNA polymerase subunit omega (72 aa).

It belongs to the RNA polymerase subunit omega family. As to quaternary structure, the RNAP catalytic core consists of 2 alpha, 1 beta, 1 beta' and 1 omega subunit. When a sigma factor is associated with the core the holoenzyme is formed, which can initiate transcription.

The catalysed reaction is RNA(n) + a ribonucleoside 5'-triphosphate = RNA(n+1) + diphosphate. Functionally, promotes RNA polymerase assembly. Latches the N- and C-terminal regions of the beta' subunit thereby facilitating its interaction with the beta and alpha subunits. This chain is DNA-directed RNA polymerase subunit omega, found in Petrotoga mobilis (strain DSM 10674 / SJ95).